A 667-amino-acid polypeptide reads, in one-letter code: Probable endo-1,3(4)-beta-glucanase AFLA_105200 (667 aa).

Residues 1–24 (MSSSSFVWTVGSIALSSLITPTIA) form the signal peptide. The GH16 domain maps to 25-288 (DGSGSRYQLT…WAGGVFGDSG (264 aa)). N-linked (GlcNAc...) asparagine glycosylation occurs at N63. Residue E144 is the Nucleophile of the active site. E149 (proton donor) is an active-site residue. 2 stretches are compositionally biased toward polar residues: residues 354–363 (VPSVTSTPIL) and 379–394 (ATSS…QTSV). 2 disordered regions span residues 354 to 427 (VPSV…ADAV) and 448 to 646 (GTIQ…AGAS). 3 stretches are compositionally biased toward low complexity: residues 395–427 (AGAE…ADAV), 448–483 (GTIQ…SQEP), and 574–622 (APTS…EATA). Polar residues predominate over residues 623-637 (PTETDSGASTGTNPE). A lipid anchor (GPI-anchor amidated glycine) is attached at G644. Residues 645 to 667 (ASKSVGISGLAGIVCGIAMAMLA) constitute a propeptide, removed in mature form.

It belongs to the glycosyl hydrolase 16 family.

It localises to the cell membrane. The enzyme catalyses Endohydrolysis of (1-&gt;3)- or (1-&gt;4)-linkages in beta-D-glucans when the glucose residue whose reducing group is involved in the linkage to be hydrolyzed is itself substituted at C-3.. In terms of biological role, mixed-linked glucanase involved in the degradation of complex natural cellulosic substrates. This chain is Probable endo-1,3(4)-beta-glucanase AFLA_105200, found in Aspergillus flavus (strain ATCC 200026 / FGSC A1120 / IAM 13836 / NRRL 3357 / JCM 12722 / SRRC 167).